The sequence spans 162 residues: Phenazine biosynthesis protein PhzB1 (162 aa).

Belongs to the PhzA/PhzB family. Homodimer.

It functions in the pathway antibiotic biosynthesis; phenazine biosynthesis. Involved in the biosynthesis of the antibiotic phenazine, a nitrogen-containing heterocyclic molecule. PhzB1 (operon phzA1B1C1E1F1G1) has a role in the biosynthesis of the phenazine during planktonic growth. The sequence is that of Phenazine biosynthesis protein PhzB1 from Pseudomonas aeruginosa (strain ATCC 15692 / DSM 22644 / CIP 104116 / JCM 14847 / LMG 12228 / 1C / PRS 101 / PAO1).